We begin with the raw amino-acid sequence, 457 residues long: tRNA modification GTPase MnmE (457 aa).

(6S)-5-formyl-5,6,7,8-tetrahydrofolate-binding residues include Arg-22, Glu-85, and Arg-124. The TrmE-type G domain maps to 219–378 (GATVVIAGKP…LKEKIYDLVL (160 aa)). Asn-229 serves as a coordination point for K(+). Residues 229–234 (NTGKSS), 248–254 (TPVPGTT), 273–276 (DTAG), and 333–336 (NKAD) each bind GTP. Ser-233 is a binding site for Mg(2+). 3 residues coordinate K(+): Thr-248, Val-250, and Thr-253. Position 254 (Thr-254) interacts with Mg(2+). Lys-457 contacts (6S)-5-formyl-5,6,7,8-tetrahydrofolate.

This sequence belongs to the TRAFAC class TrmE-Era-EngA-EngB-Septin-like GTPase superfamily. TrmE GTPase family. Homodimer. Heterotetramer of two MnmE and two MnmG subunits. Requires K(+) as cofactor.

The protein localises to the cytoplasm. Its function is as follows. Exhibits a very high intrinsic GTPase hydrolysis rate. Involved in the addition of a carboxymethylaminomethyl (cmnm) group at the wobble position (U34) of certain tRNAs, forming tRNA-cmnm(5)s(2)U34. This chain is tRNA modification GTPase MnmE, found in Syntrophus aciditrophicus (strain SB).